The sequence spans 225 residues: Sugar fermentation stimulation protein homolog (225 aa).

Belongs to the SfsA family.

This Sulfolobus acidocaldarius (strain ATCC 33909 / DSM 639 / JCM 8929 / NBRC 15157 / NCIMB 11770) protein is Sugar fermentation stimulation protein homolog.